The sequence spans 87 residues: MNSLLMITACLAVIGTVWAKEGYIVNYYDGCKYACLKLGENDYCLRECKARYYKSAGGYCYAFACWCTHLYEQAVVWPLPNKTCYGK.

A signal peptide spans 1 to 19; that stretch reads MNSLLMITACLAVIGTVWA. One can recognise an LCN-type CS-alpha/beta domain in the interval 20–85; it reads KEGYIVNYYD…VWPLPNKTCY (66 aa). 4 cysteine pairs are disulfide-bonded: Cys31/Cys84, Cys35/Cys60, Cys44/Cys65, and Cys48/Cys67. Position 85 is a tyrosine amide (Tyr85).

The protein belongs to the long (4 C-C) scorpion toxin superfamily. Sodium channel inhibitor family. Beta subfamily. As to expression, expressed by the venom gland.

Its subcellular location is the secreted. In terms of biological role, beta toxins bind voltage-independently at site-4 of sodium channels (Nav) and shift the voltage of activation toward more negative potentials thereby affecting sodium channel activation and promoting spontaneous and repetitive firing. The protein is Toxin Cll3 of Centruroides limpidus (Mexican scorpion).